Consider the following 345-residue polypeptide: Sorting nexin-15 (345 aa).

The PX domain occupies 1–130 (MSRQAKDDFL…EFFRGGEVTR (130 aa)). At R105 the chain carries Omega-N-methylarginine. Residues 133-163 (EVSGDLHILPPPLIPTPPPDEPRVQPHETWL) form a disordered region. A compositionally biased stretch (pro residues) spans 141–151 (LPPPLIPTPPP). 2 positions are modified to phosphoserine: S208 and S234. The segment at 226 to 274 (SKEEGAGPSPTHIGELAALEAGSGRPDQEPWEPGGQAEEDDEEGEPAPA) is disordered. Positions 272-345 (APAYLSQATE…AEEILHLHLS (74 aa)) constitute an MIT domain.

It belongs to the sorting nexin family.

Its function is as follows. May be involved in several stages of intracellular trafficking. Overexpression of SNX15 disrupts the normal trafficking of proteins from the plasma membrane to recycling endosomes or the TGN. The polypeptide is Sorting nexin-15 (SNX15) (Bos taurus (Bovine)).